Here is a 281-residue protein sequence, read N- to C-terminus: MASSSILIPPILTRRNLLLSTTIATVTPPPPAKPPSPDITITDRVFLDFSLCPTYFRSDPSATLSSTTPCSDSTPLGRVVLGLYGRHVPITVSTFKRMCTSSSTSYKNTPVHKIFPGQYFLAGRQGGGRRDTAEVGYSLRDLPRNTDVVNSKAFLLPHARAGVVSLCLSENDDDDDIRLDPDYRNVEFLITTGPGPSPQLDGGNIVFGTVLEGLDVVTSISSIPTYKPSENIKQFNDFAEFLGDERAQNARSLWNRPLKTVFISGCGELKVTNPSLSPTLP.

A chloroplast-targeting transit peptide spans methionine 1–alanine 24. The 203-residue stretch at serine 66–glutamate 268 folds into the PPIase cyclophilin-type domain.

Belongs to the cyclophilin-type PPIase family. In terms of processing, S-nytrosylated during the hypersensitive disease resistance response. In terms of tissue distribution, ubiquitous. Not detected in roots.

It is found in the plastid. It localises to the chloroplast. It carries out the reaction [protein]-peptidylproline (omega=180) = [protein]-peptidylproline (omega=0). PPIases accelerate the folding of proteins. It catalyzes the cis-trans isomerization of proline imidic peptide bonds in oligopeptides. This Arabidopsis thaliana (Mouse-ear cress) protein is Peptidyl-prolyl cis-trans isomerase CYP28, chloroplastic (CYP28).